The chain runs to 215 residues: 16S rRNA (adenine(1408)-N(1))-methyltransferase (215 aa).

S-adenosyl-L-methionine contacts are provided by residues Gly-32, Asp-55, 87 to 88 (AE), 102 to 107 (LMPWGS), and 191 to 193 (TSW).

It belongs to the methyltransferase superfamily. Kanamycin-apramycin resistance family.

It carries out the reaction adenosine(1408) in 16S rRNA + S-adenosyl-L-methionine = N(1)-methyladenosine(1408) in 16S rRNA + S-adenosyl-L-homocysteine + H(+). Its function is as follows. Specifically methylates the N(1) position of adenine 1408 in 16S rRNA. Confers resistance to various aminoglycosides, including kanamycin, neomycin and apramycin. In Streptoalloteichus tenebrarius (strain ATCC 17920 / DSM 40477 / JCM 4838 / CBS 697.72 / NBRC 16177 / NCIMB 11028 / NRRL B-12390 / A12253. 1 / ISP 5477) (Streptomyces tenebrarius), this protein is 16S rRNA (adenine(1408)-N(1))-methyltransferase (kamB).